A 173-amino-acid polypeptide reads, in one-letter code: 6,7-dimethyl-8-ribityllumazine synthase (173 aa).

Residues F24, 58-60 (ALE), and 82-84 (AVI) contribute to the 5-amino-6-(D-ribitylamino)uracil site. (2S)-2-hydroxy-3-oxobutyl phosphate is bound at residue 87–88 (ET). The active-site Proton donor is H90. N115 contributes to the 5-amino-6-(D-ribitylamino)uracil binding site. (2S)-2-hydroxy-3-oxobutyl phosphate is bound at residue R129. A disordered region spans residues 150-173 (TLDQLSDDEEDEEDEDDEDEEERA). Acidic residues predominate over residues 154–173 (LSDDEEDEEDEDDEDEEERA).

This sequence belongs to the DMRL synthase family.

It carries out the reaction (2S)-2-hydroxy-3-oxobutyl phosphate + 5-amino-6-(D-ribitylamino)uracil = 6,7-dimethyl-8-(1-D-ribityl)lumazine + phosphate + 2 H2O + H(+). It participates in cofactor biosynthesis; riboflavin biosynthesis; riboflavin from 2-hydroxy-3-oxobutyl phosphate and 5-amino-6-(D-ribitylamino)uracil: step 1/2. Its function is as follows. Catalyzes the formation of 6,7-dimethyl-8-ribityllumazine by condensation of 5-amino-6-(D-ribitylamino)uracil with 3,4-dihydroxy-2-butanone 4-phosphate. This is the penultimate step in the biosynthesis of riboflavin. This chain is 6,7-dimethyl-8-ribityllumazine synthase, found in Burkholderia mallei (strain NCTC 10247).